The primary structure comprises 429 residues: 26S proteasome regulatory subunit 6A homolog (429 aa).

A disordered region spans residues 1-21 (MSSPPPAAAAAMAVDDADDDQ). 217–224 (GPPGTGKT) contributes to the ATP binding site.

This sequence belongs to the AAA ATPase family.

It is found in the cytoplasm. It localises to the nucleus. Its function is as follows. The 26S proteasome is involved in the ATP-dependent degradation of ubiquitinated proteins. The regulatory (or ATPase) complex confers ATP dependency and substrate specificity to the 26S complex. The protein is 26S proteasome regulatory subunit 6A homolog (TBP1) of Oryza sativa subsp. japonica (Rice).